The primary structure comprises 250 residues: uncharacterized protein (250 aa).

A divalent metal cation contacts are provided by glutamate 97, glutamate 99, and aspartate 128.

This sequence belongs to the FAH family.

This is an uncharacterized protein from Archaeoglobus fulgidus (strain ATCC 49558 / DSM 4304 / JCM 9628 / NBRC 100126 / VC-16).